Here is a 109-residue protein sequence, read N- to C-terminus: Nucleoid-associated protein Shal_1591 (109 aa).

The interval 87–109 is disordered; sequence NQKEKMAEVTGGMQLPPGMKMPF.

Belongs to the YbaB/EbfC family. As to quaternary structure, homodimer.

Its subcellular location is the cytoplasm. The protein resides in the nucleoid. Binds to DNA and alters its conformation. May be involved in regulation of gene expression, nucleoid organization and DNA protection. The sequence is that of Nucleoid-associated protein Shal_1591 from Shewanella halifaxensis (strain HAW-EB4).